The primary structure comprises 1053 residues: Prestalk protein (1053 aa).

Residues 1–18 (MNKIYLILILFTFVGIIL) form the signal peptide. The X-1 repeat unit spans residues 38 to 60 (NKCTLDKCNNGCCSNTPININDN). The segment at 38 to 1019 (NKCTLDKCNN…VHTPVDCNDN (982 aa)) is 41 X 24 AA tandem repeats, Cys-rich. The stretch at 61–84 (DECTVDTCNPKTGISHTPVNCDDG) is one X-2 repeat. The stretch at 85–108 (NSCTADSCLCGKGCQHVPIACDDN) is one X-3 repeat. The stretch at 109–132 (NACTVDSCSNSTGCCHTPLSCDDN) is one A-1 repeat. The A-2 repeat unit spans residues 133–156 (NPCTVDSCSNSTGCCHTPINVDDH). The stretch at 157–180 (NACTEDKCTQSGGVTHTPIACDDK) is one B-1 repeat. Residues 181–204 (NACTVDSCSNSTGCCHTPLSCDDN) form an A-3 repeat. One copy of the A-4 repeat lies at 205–228 (NACTVDSCSNSTGCVHTPINVDDH). Residues 229–252 (NACTEDKCTQSGGVTHTPIACDDK) form a B-2 repeat. An A-5 repeat occupies 253–276 (NACTADSCSNSTGCCHTPITCDDN). An A-6 repeat occupies 277-300 (NACTVDSCSNSTGCCHTPINVDDN). One copy of the B-3 repeat lies at 301-324 (NACTEDKCTQSGGVTHTPIACDDK). One copy of the A-7 repeat lies at 325–348 (NACTVDSCSNSTGCVHTPLACDDK). The stretch at 349-372 (NPCTVDSCSNSTGCCHTPINVDDN) is one A-8 repeat. A B-4 repeat occupies 373 to 396 (NACTEDKCTQSGGVTHTPINCDDN). The A-9 repeat unit spans residues 397-420 (NKCTVDSCSNSTGCCHTPMSCDDN). Residues 421-444 (NPCTVDSCSNSTGCVHTPINVDDN) form an A-10 repeat. Residues 445 to 468 (NACTEDKCTQNGGVTHTPIACDDK) form a B-5 repeat. Residues 469 to 492 (NACTVDSCSNSTGCCHTPLKCDDN) form an A-11 repeat. One copy of the A-12 repeat lies at 493–516 (NACTVDSCSNSTGCVHTPINVDDN). Residues 517-540 (NACTEDKCTQSGGVTHTPISCDDK) form a B-6 repeat. Residues 541–564 (NPCTIDSCSNSTGCVHTPMSCDDR) form an A-13 repeat. An X-4 repeat occupies 565 to 588 (NPCTSDFCSWEKGCQHVALSCNDF). The stretch at 589–612 (NACTMDSCSNSTGCTHTPIACDDK) is one A-14 repeat. Residues 613-636 (NACTVDSCSNSTGCVHTPLTCDDN) form an A-15 repeat. The stretch at 637–660 (NPCTVDSCSNSTGCCHTPINVDDH) is one A-16 repeat. Residues 661–684 (NACTEDKCTQSGGVTHTPIACDDK) form a B-7 repeat. The A-17 repeat unit spans residues 685 to 708 (NACTVDSCSNSTGCCHTPLSCDDN). An A-18 repeat occupies 709-732 (NACTVDSCSNSTGCVHTPINVDDN). The B-8 repeat unit spans residues 733-756 (NACTEDKCTQNGGVTHTPIACDDK). Residues 757–780 (NACTVDSCSNSTGCCHTPLKCDDN) form an A-19 repeat. One copy of the A-20 repeat lies at 781–804 (NPCTVDSCSNSTGCVHTPMNVDDN). The B-9 repeat unit spans residues 805-828 (NACTEDKCTQNGGVTHTPIRCDDL). An A-21 repeat occupies 829–852 (NSCTADSCSNSTGCVHTPINCDDN). Residues 853–876 (NKCTADSCSNSTGCCHTPISCDDN) form an A-22 repeat. The stretch at 877–900 (NPCTVDSCSNSTGCCHTPINVDDN) is one A-23 repeat. The stretch at 901 to 924 (NPCTEDKCTQSGGVTHTPIGCNDN) is one B-10 repeat. The A-24 repeat unit spans residues 925–948 (NACTVDSCSNSTGCTHTPMKCDDN). Residues 949–971 (NPCTIDSCSNSTGCVHTPMNCDD) form an A-25 repeat. One copy of the A-26 repeat lies at 972–995 (GNFCTLDSCCSTGCTHTPIIIDDN). The stretch at 996-1019 (NPCTVDSCCNSTGVVHTPVDCNDN) is one A-27 repeat.

The protein resides in the secreted. Its subcellular location is the extracellular space. It localises to the extracellular matrix. Its function is as follows. Component of the stalk tube, the matrix that encases stalk cells. In Dictyostelium discoideum (Social amoeba), this protein is Prestalk protein (ecmB).